Here is a 413-residue protein sequence, read N- to C-terminus: Multifunctional CCA protein (413 aa).

2 residues coordinate ATP: G8 and R11. G8 and R11 together coordinate CTP. Mg(2+)-binding residues include D21 and D23. 3 residues coordinate ATP: R91, R143, and R146. CTP-binding residues include R91, R143, and R146. Positions 232 to 333 constitute an HD domain; the sequence is TGVHVMMVVD…VRFFERTDAL (102 aa).

Belongs to the tRNA nucleotidyltransferase/poly(A) polymerase family. Bacterial CCA-adding enzyme type 1 subfamily. In terms of assembly, monomer. Can also form homodimers and oligomers. Requires Mg(2+) as cofactor. The cofactor is Ni(2+).

The enzyme catalyses a tRNA precursor + 2 CTP + ATP = a tRNA with a 3' CCA end + 3 diphosphate. The catalysed reaction is a tRNA with a 3' CCA end + 2 CTP + ATP = a tRNA with a 3' CCACCA end + 3 diphosphate. In terms of biological role, catalyzes the addition and repair of the essential 3'-terminal CCA sequence in tRNAs without using a nucleic acid template. Adds these three nucleotides in the order of C, C, and A to the tRNA nucleotide-73, using CTP and ATP as substrates and producing inorganic pyrophosphate. tRNA 3'-terminal CCA addition is required both for tRNA processing and repair. Also involved in tRNA surveillance by mediating tandem CCA addition to generate a CCACCA at the 3' terminus of unstable tRNAs. While stable tRNAs receive only 3'-terminal CCA, unstable tRNAs are marked with CCACCA and rapidly degraded. The protein is Multifunctional CCA protein of Burkholderia multivorans (strain ATCC 17616 / 249).